We begin with the raw amino-acid sequence, 337 residues long: Protein SphX (337 aa).

The signal sequence occupies residues 1–30 (MTTLKPALRRAAVLLPIAAVASSLFPIQEA).

The protein belongs to the PstS family. Post-translationally, the N-terminus is blocked.

The protein resides in the cell inner membrane. May be involved in the system for phosphate transport across the cytoplasmic membrane. The sequence is that of Protein SphX (sphX) from Synechococcus elongatus (strain ATCC 33912 / PCC 7942 / FACHB-805) (Anacystis nidulans R2).